A 152-amino-acid chain; its full sequence is MNEQSEKNNSIQERHTDHSFPEKNCQIGQKQLQQIERQLKCLAFRNPGPQVADFNPETRQQKKKARMSKMNEYFSTKYKIMRKYDKSGRLICNDADLCDCLEKNCLGCFYPCPKCNSNKCGPECRCNRRWVYDAIVTESGEVISTLPFNVPD.

Positions 1–21 are disordered; sequence MNEQSEKNNSIQERHTDHSFP.

The protein is ARL14 effector protein-like (ARL14EPL) of Homo sapiens (Human).